Consider the following 774-residue polypeptide: Mastermind-like domain-containing protein 1 (774 aa).

Disordered regions lie at residues 257 to 279 (STGISYSIPSTSKQIVSPSSSMA), 310 to 365 (LAAS…PQSL), 386 to 421 (ALLSSMTSSSNAALGPAMPYAPEKLPSPALTQQPQF), 442 to 473 (HLMSALPASNPGPSPPYRPEKLSSPGLPQQSF), 525 to 609 (GMAS…QPDH), 656 to 678 (PQHQHGNSFTSRQDPQPGDVSPS), and 755 to 774 (LPSCDATARGTEIRSYGNDP). Pro residues predominate over residues 331 to 361 (LPPPGLSPPYRPVPSPHPPPLPLPPPPPPFS). Polar residues predominate over residues 386 to 397 (ALLSSMTSSSNA). A compositionally biased stretch (low complexity) spans 574–609 (QQPTPTQASSATASSTATATLQLQQQQQQQQQQPDH). Over residues 656–669 (PQHQHGNSFTSRQD) the composition is skewed to polar residues. The residue at position 676 (Ser676) is a Phosphoserine.

This sequence belongs to the mastermind family. As to expression, expressed in fetal brain, fetal ovary and fetal testis. Expressed in adult brain, ovary, skin, testis, uterus. Highly expressed in skeletal muscle.

It localises to the nucleus. Its function is as follows. Transactivates the HES3 promoter independently of NOTCH proteins. HES3 is a non-canonical NOTCH target gene which lacks binding sites for RBPJ. The protein is Mastermind-like domain-containing protein 1 (MAMLD1) of Homo sapiens (Human).